A 207-amino-acid polypeptide reads, in one-letter code: Urease accessory protein UreG (207 aa).

12-19 (GPVGAGKT) is a binding site for GTP.

Belongs to the SIMIBI class G3E GTPase family. UreG subfamily. Homodimer. UreD, UreF and UreG form a complex that acts as a GTP-hydrolysis-dependent molecular chaperone, activating the urease apoprotein by helping to assemble the nickel containing metallocenter of UreC. The UreE protein probably delivers the nickel.

It localises to the cytoplasm. Functionally, facilitates the functional incorporation of the urease nickel metallocenter. This process requires GTP hydrolysis, probably effectuated by UreG. This is Urease accessory protein UreG from Cereibacter sphaeroides (strain ATCC 17023 / DSM 158 / JCM 6121 / CCUG 31486 / LMG 2827 / NBRC 12203 / NCIMB 8253 / ATH 2.4.1.) (Rhodobacter sphaeroides).